The chain runs to 513 residues: Glutamate--tRNA ligase 2 (513 aa).

A 'HIGH' region motif is present at residues 11 to 21 (PSPTGFLHIGS). The short motif at 240 to 244 (KLSKR) is the 'KMSKS' region element. Lysine 243 is a binding site for ATP.

This sequence belongs to the class-I aminoacyl-tRNA synthetase family. Glutamate--tRNA ligase type 1 subfamily. As to quaternary structure, monomer.

The protein localises to the cytoplasm. It carries out the reaction tRNA(Glu) + L-glutamate + ATP = L-glutamyl-tRNA(Glu) + AMP + diphosphate. Functionally, catalyzes the attachment of glutamate to tRNA(Glu) in a two-step reaction: glutamate is first activated by ATP to form Glu-AMP and then transferred to the acceptor end of tRNA(Glu). The sequence is that of Glutamate--tRNA ligase 2 from Rickettsia rickettsii (strain Iowa).